Consider the following 346-residue polypeptide: 4-hydroxy-2-oxovalerate aldolase (346 aa).

One can recognise a Pyruvate carboxyltransferase domain in the interval 8–260 (VTLHDMSLRD…ETGIDLYKIM (253 aa)). Position 16–17 (16–17 (RD)) interacts with substrate. D17 lines the Mn(2+) pocket. H20 functions as the Proton acceptor in the catalytic mechanism. Residues S170 and H199 each contribute to the substrate site. H199 and H201 together coordinate Mn(2+). Y290 is a substrate binding site.

Belongs to the 4-hydroxy-2-oxovalerate aldolase family.

It catalyses the reaction (S)-4-hydroxy-2-oxopentanoate = acetaldehyde + pyruvate. This is 4-hydroxy-2-oxovalerate aldolase (nahM) from Stutzerimonas stutzeri (Pseudomonas stutzeri).